The chain runs to 305 residues: N-acetylneuraminate lyase 2 (305 aa).

The aceneuramate site is built by S47 and T48. The Proton donor role is filled by Y137. The active-site Schiff-base intermediate with substrate is the K165. Residues T167, G189, D191, E192, and S208 each coordinate aceneuramate.

This sequence belongs to the DapA family. NanA subfamily. Homotetramer.

Its subcellular location is the cytoplasm. The catalysed reaction is aceneuramate = aldehydo-N-acetyl-D-mannosamine + pyruvate. It functions in the pathway amino-sugar metabolism; N-acetylneuraminate degradation; D-fructose 6-phosphate from N-acetylneuraminate: step 1/5. Functionally, catalyzes the reversible aldol cleavage of N-acetylneuraminic acid (sialic acid; Neu5Ac) to form pyruvate and N-acetylmannosamine (ManNAc) via a Schiff base intermediate. This is N-acetylneuraminate lyase 2 from Escherichia coli O6:H1 (strain CFT073 / ATCC 700928 / UPEC).